We begin with the raw amino-acid sequence, 363 residues long: Spermidine/putrescine import ATP-binding protein PotA (363 aa).

In terms of domain architecture, ABC transporter spans 4-234; it reads LEIRNVTRRF…PRNHFVADFI (231 aa). Residue 36–43 coordinates ATP; the sequence is GPSGCGKT.

It belongs to the ABC transporter superfamily. Spermidine/putrescine importer (TC 3.A.1.11.1) family. As to quaternary structure, the complex is composed of two ATP-binding proteins (PotA), two transmembrane proteins (PotB and PotC) and a solute-binding protein (PotD).

The protein resides in the cell inner membrane. The catalysed reaction is ATP + H2O + polyamine-[polyamine-binding protein]Side 1 = ADP + phosphate + polyamineSide 2 + [polyamine-binding protein]Side 1.. Its function is as follows. Part of the ABC transporter complex PotABCD involved in spermidine/putrescine import. Responsible for energy coupling to the transport system. This chain is Spermidine/putrescine import ATP-binding protein PotA, found in Nitrosospira multiformis (strain ATCC 25196 / NCIMB 11849 / C 71).